The chain runs to 335 residues: Zinc-type alcohol dehydrogenase-like protein SAV2186 (335 aa).

This sequence belongs to the zinc-containing alcohol dehydrogenase family. Quinone oxidoreductase subfamily.

The sequence is that of Zinc-type alcohol dehydrogenase-like protein SAV2186 from Staphylococcus aureus (strain Mu50 / ATCC 700699).